Here is a 583-residue protein sequence, read N- to C-terminus: Interactor of constitutive active ROPs 2, chloroplastic (583 aa).

Residues 1–55 constitute a chloroplast transit peptide; sequence MQTPKPRPGSLEVPQKKSPASTPKTARKLKTSESDPVSSPNTKIRTPKTQSPKVV. 2 disordered regions span residues 1 to 80 and 101 to 125; these read MQTP…PELA and EALKKEAQDQAEETKQQLMEINASE. Over residues 34–52 the composition is skewed to polar residues; the sequence is SDPVSSPNTKIRTPKTQSP. 2 coiled-coil regions span residues 74–207 and 238–516; these read GKTP…DAKE and MKMS…AAAT. Residues 102–115 are compositionally biased toward basic and acidic residues; it reads ALKKEAQDQAEETK. A disordered region spans residues 518–583; it reads LSGGNNNNNS…IGVLLKKSQK (66 aa). Residues 519-529 are compositionally biased toward low complexity; sequence SGGNNNNNSNG. A Phosphoserine modification is found at S540.

It belongs to the ICR family. Interacts with ARAC8, ARAC11 and KIN13A in vitro, but not with ICR1 or SEC3A.

The protein resides in the plastid. Its subcellular location is the chloroplast. Functionally, acts as a scaffold, mediating interaction of ROPs with different proteins. In Arabidopsis thaliana (Mouse-ear cress), this protein is Interactor of constitutive active ROPs 2, chloroplastic (ICR2).